Reading from the N-terminus, the 147-residue chain is Large ribosomal subunit protein uL11 (147 aa).

It belongs to the universal ribosomal protein uL11 family. As to quaternary structure, part of the ribosomal stalk of the 50S ribosomal subunit. Interacts with L10 and the large rRNA to form the base of the stalk. L10 forms an elongated spine to which L12 dimers bind in a sequential fashion forming a multimeric L10(L12)X complex. Post-translationally, one or more lysine residues are methylated.

Its function is as follows. Forms part of the ribosomal stalk which helps the ribosome interact with GTP-bound translation factors. The protein is Large ribosomal subunit protein uL11 of Bacteroides thetaiotaomicron (strain ATCC 29148 / DSM 2079 / JCM 5827 / CCUG 10774 / NCTC 10582 / VPI-5482 / E50).